We begin with the raw amino-acid sequence, 327 residues long: Phenylalanine--tRNA ligase alpha subunit (327 aa).

Glu253 serves as a coordination point for Mg(2+).

This sequence belongs to the class-II aminoacyl-tRNA synthetase family. Phe-tRNA synthetase alpha subunit type 1 subfamily. As to quaternary structure, tetramer of two alpha and two beta subunits. Mg(2+) serves as cofactor.

It localises to the cytoplasm. It carries out the reaction tRNA(Phe) + L-phenylalanine + ATP = L-phenylalanyl-tRNA(Phe) + AMP + diphosphate + H(+). This is Phenylalanine--tRNA ligase alpha subunit from Laribacter hongkongensis (strain HLHK9).